A 437-amino-acid chain; its full sequence is Transcription factor AP-2-alpha (437 aa).

Lysine 10 participates in a covalent cross-link: Glycyl lysine isopeptide (Lys-Gly) (interchain with G-Cter in SUMO); alternate. A Glycyl lysine isopeptide (Lys-Gly) (interchain with G-Cter in SUMO2); alternate cross-link involves residue lysine 10. A disordered region spans residues 14–107 (CEDRHDGTSN…GQRQSQESGL (94 aa)). The PPxY motif signature appears at 57–62 (YFPPPY). 2 stretches are compositionally biased toward low complexity: residues 65-74 (IYPQSQDPYS) and 88-101 (QPQP…GQRQ). Glycyl lysine isopeptide (Lys-Gly) (interchain with G-Cter in SUMO2) cross-links involve residues lysine 177 and lysine 184. Phosphoserine; by PKA is present on serine 239. The segment at 280–410 (RRKAANVTLL…YLTEALKAMD (131 aa)) is H-S-H (helix-span-helix), dimerization. The span at 414-427 (LSNNPNSHTDNNAK) shows a compositional bias: polar residues. A disordered region spans residues 414–437 (LSNNPNSHTDNNAKSSDKEEKHRK). Positions 428–437 (SSDKEEKHRK) are enriched in basic and acidic residues.

The protein belongs to the AP-2 family. In terms of assembly, binds DNA as a dimer. Can form homodimers or heterodimers with other AP-2 family members. Interacts with WWOX. Interacts with CITED4. Interacts with UBE2I. Interacts with RALBP1 in a complex also containing EPN1 and NUMB during interphase and mitosis. Interacts with KCTD1; this interaction represses transcription activation. Interacts (via C-terminus) with CITED2 (via C-terminus); the interaction stimulates TFAP2A-transcriptional activation. Interacts (via N-terminus) with EP300 (via N-terminus); the interaction requires CITED2. Interacts with KCTD15; this interaction inhibits TFAP2A transcriptional activation. Sumoylated on Lys-10; which inhibits transcriptional activity.

It localises to the nucleus. Functionally, sequence-specific DNA-binding protein that interacts with inducible viral and cellular enhancer elements to regulate transcription of selected genes. AP-2 factors bind to the consensus sequence 5'-GCCNNNGGC-3' and activate genes involved in a large spectrum of important biological functions including proper eye, face, body wall, limb and neural tube development. They also suppress a number of genes including MCAM/MUC18, C/EBP alpha and MYC. AP-2-alpha is the only AP-2 protein required for early morphogenesis of the lens vesicle. Together with the CITED2 coactivator, stimulates the PITX2 P1 promoter transcription activation. Associates with chromatin to the PITX2 P1 promoter region. This Homo sapiens (Human) protein is Transcription factor AP-2-alpha (TFAP2A).